We begin with the raw amino-acid sequence, 130 residues long: Phosphoribosyl-AMP cyclohydrolase (130 aa).

Asp77 is a Mg(2+) binding site. A Zn(2+)-binding site is contributed by Cys78. Asp79 and Asp81 together coordinate Mg(2+). Zn(2+)-binding residues include Cys95 and Cys102.

The protein belongs to the PRA-CH family. Homodimer. Mg(2+) serves as cofactor. Requires Zn(2+) as cofactor.

The protein resides in the cytoplasm. The enzyme catalyses 1-(5-phospho-beta-D-ribosyl)-5'-AMP + H2O = 1-(5-phospho-beta-D-ribosyl)-5-[(5-phospho-beta-D-ribosylamino)methylideneamino]imidazole-4-carboxamide. It functions in the pathway amino-acid biosynthesis; L-histidine biosynthesis; L-histidine from 5-phospho-alpha-D-ribose 1-diphosphate: step 3/9. Catalyzes the hydrolysis of the adenine ring of phosphoribosyl-AMP. The chain is Phosphoribosyl-AMP cyclohydrolase from Pseudomonas putida (strain GB-1).